The following is a 371-amino-acid chain: Histidinol-phosphate aminotransferase (371 aa).

Lysine 228 carries the N6-(pyridoxal phosphate)lysine modification.

This sequence belongs to the class-II pyridoxal-phosphate-dependent aminotransferase family. Histidinol-phosphate aminotransferase subfamily. Pyridoxal 5'-phosphate is required as a cofactor.

The catalysed reaction is L-histidinol phosphate + 2-oxoglutarate = 3-(imidazol-4-yl)-2-oxopropyl phosphate + L-glutamate. The protein operates within amino-acid biosynthesis; L-histidine biosynthesis; L-histidine from 5-phospho-alpha-D-ribose 1-diphosphate: step 7/9. The polypeptide is Histidinol-phosphate aminotransferase (Methanococcus maripaludis (strain C5 / ATCC BAA-1333)).